A 199-amino-acid polypeptide reads, in one-letter code: Probable GTP-binding protein EngB (199 aa).

An EngB-type G domain is found at 28 to 199 (DLPEIALAGR…DSWDAILEQV (172 aa)). GTP-binding positions include 36–43 (GRSNVGKS), 63–67 (GKTQL), 81–84 (DVPG), 148–151 (TKAD), and 180–182 (FSS). Residues S43 and T65 each contribute to the Mg(2+) site.

It belongs to the TRAFAC class TrmE-Era-EngA-EngB-Septin-like GTPase superfamily. EngB GTPase family. The cofactor is Mg(2+).

Functionally, necessary for normal cell division and for the maintenance of normal septation. This chain is Probable GTP-binding protein EngB, found in Streptococcus pyogenes serotype M49 (strain NZ131).